A 190-amino-acid polypeptide reads, in one-letter code: ATP synthase subunit b (190 aa).

A helical transmembrane segment spans residues 34 to 54; sequence LDIFETNLINLAILVGILFYF.

The protein belongs to the ATPase B chain family. F-type ATPases have 2 components, F(1) - the catalytic core - and F(0) - the membrane proton channel. F(1) has five subunits: alpha(3), beta(3), gamma(1), delta(1), epsilon(1). F(0) has four main subunits: a(1), b(1), b'(1) and c(10-14). The alpha and beta chains form an alternating ring which encloses part of the gamma chain. F(1) is attached to F(0) by a central stalk formed by the gamma and epsilon chains, while a peripheral stalk is formed by the delta, b and b' chains.

The protein resides in the cellular thylakoid membrane. Functionally, f(1)F(0) ATP synthase produces ATP from ADP in the presence of a proton or sodium gradient. F-type ATPases consist of two structural domains, F(1) containing the extramembraneous catalytic core and F(0) containing the membrane proton channel, linked together by a central stalk and a peripheral stalk. During catalysis, ATP synthesis in the catalytic domain of F(1) is coupled via a rotary mechanism of the central stalk subunits to proton translocation. Its function is as follows. Component of the F(0) channel, it forms part of the peripheral stalk, linking F(1) to F(0). This chain is ATP synthase subunit b, found in Nostoc punctiforme (strain ATCC 29133 / PCC 73102).